We begin with the raw amino-acid sequence, 241 residues long: L-aspartate dehydrogenase (241 aa).

NAD(+)-binding residues include alanine 109 and asparagine 164. Histidine 193 is a catalytic residue.

The protein belongs to the L-aspartate dehydrogenase family.

It catalyses the reaction L-aspartate + NADP(+) + H2O = oxaloacetate + NH4(+) + NADPH + H(+). The catalysed reaction is L-aspartate + NAD(+) + H2O = oxaloacetate + NH4(+) + NADH + H(+). It functions in the pathway cofactor biosynthesis; NAD(+) biosynthesis; iminoaspartate from L-aspartate (dehydrogenase route): step 1/1. In terms of biological role, specifically catalyzes the NAD or NADP-dependent dehydrogenation of L-aspartate to iminoaspartate. The protein is L-aspartate dehydrogenase of Thermotoga sp. (strain RQ2).